The sequence spans 185 residues: MVKDVISSMNVHMDKSIESLRKEYQKVRTGRASTSLLDDIKVDSYGTLSPLNQVATLAIPEARTITISPWDSKMIAPIEKAIMNSNLGLNPANDGKMIRLTLPPLTEERRKDIVKQLKRDAEDAKVALRNIRRDAIDQLKKLEKDKSISEDEQKRAEKEVQDFTNSHVAKVDEVLLHKEKEVMEV.

The protein belongs to the RRF family.

The protein resides in the cytoplasm. Responsible for the release of ribosomes from messenger RNA at the termination of protein biosynthesis. May increase the efficiency of translation by recycling ribosomes from one round of translation to another. The protein is Ribosome-recycling factor of Citrifermentans bemidjiense (strain ATCC BAA-1014 / DSM 16622 / JCM 12645 / Bem) (Geobacter bemidjiensis).